The sequence spans 279 residues: 3-methyl-2-oxobutanoate hydroxymethyltransferase (279 aa).

Residues Asp-43 and Asp-82 each coordinate Mg(2+). 3-methyl-2-oxobutanoate is bound by residues 43 to 44 (DS), Asp-82, and Lys-112. Glu-114 provides a ligand contact to Mg(2+). Glu-181 (proton acceptor) is an active-site residue.

The protein belongs to the PanB family. Homodecamer; pentamer of dimers. It depends on Mg(2+) as a cofactor.

Its subcellular location is the cytoplasm. It carries out the reaction 3-methyl-2-oxobutanoate + (6R)-5,10-methylene-5,6,7,8-tetrahydrofolate + H2O = 2-dehydropantoate + (6S)-5,6,7,8-tetrahydrofolate. It participates in cofactor biosynthesis; (R)-pantothenate biosynthesis; (R)-pantoate from 3-methyl-2-oxobutanoate: step 1/2. Catalyzes the reversible reaction in which hydroxymethyl group from 5,10-methylenetetrahydrofolate is transferred onto alpha-ketoisovalerate to form ketopantoate. This chain is 3-methyl-2-oxobutanoate hydroxymethyltransferase, found in Geobacillus kaustophilus (strain HTA426).